A 794-amino-acid polypeptide reads, in one-letter code: Elongator complex protein 2 (794 aa).

13 WD repeats span residues 55-93 (EHTKRVNTVRWLDCDKLLSGGDDAIAILWELDETGTTKS), 98-140 (GHTS…YVCF), 147-188 (DGFC…AGEG), 203-244 (GHED…KEQM), 286-328 (GHEG…IWLE), 337-376 (GNSVGFYGGKFSGDGHSIMAHSYQGGFHIWSQDPDRPQLW), 384-423 (GHYGEVRDLAWEHSGAYLMTASADQTTRLHAPWLQDGANP), 433-472 (IHGYDMQALALLSRYKFASGAEEKIVRTFQAPANFIENFR), 557-601 (GHGY…QIQK), 604-643 (GHQLTVTQLSFSPDSRYLLSVSRDRRWCLYERQDSSVSYQ), 654-693 (VHTRIIWSCDWSHDGQFFVTSSRDGKVVVWKKEEDCKESS), 705-751 (LKNE…WKLL), and 759-794 (AHHLTVRRLQFRPGKQLQLASCGEDHLVRIYDIKLT).

The protein belongs to the WD repeat ELP2 family. As to quaternary structure, component of the elongator complex composed of Elp1, Elp2, Elp3, Elp4, Elp5 and Elp6. The elongator complex associates with and stabilizes microtubules; efficient interaction requires the full complex.

The protein localises to the cytoplasm. The protein resides in the nucleus. Its subcellular location is the cytoskeleton. It is found in the spindle. The protein operates within tRNA modification; 5-methoxycarbonylmethyl-2-thiouridine-tRNA biosynthesis. Its function is as follows. Component of the elongator complex, which is required for multiple tRNA modifications, including mcm5U (5-methoxycarbonylmethyl uridine), mcm5s2U (5-methoxycarbonylmethyl-2-thiouridine), and ncm5U (5-carbamoylmethyl uridine). The elongator complex catalyzes the formation of carboxymethyluridine in the wobble base at position 34 in tRNAs. Binding by the elongator complex stabilizes microtubules and promotes their growth. This induces central spindle asymmetry, promoting polarized signaling endosome trafficking during asymmetric cell division and cell fate assignation of sensory organ precursor cells. Involved in the regulation of the STAT pathway. This is Elongator complex protein 2 from Drosophila melanogaster (Fruit fly).